The sequence spans 184 residues: Leucine-rich repeat-containing protein 20 (184 aa).

LRR repeat units follow at residues 23-44, 51-72, 75-96, 98-120, 121-141, and 145-167; these read GSDT…IYKV, QIHL…FMTT, QLRE…VSSL, HLRA…TTLP, ALET…EKLA, and ALRV…APPL. Phosphoserine is present on S175.

This chain is Leucine-rich repeat-containing protein 20 (Lrrc20), found in Mus musculus (Mouse).